We begin with the raw amino-acid sequence, 346 residues long: Sulfate/thiosulfate import ATP-binding protein CysA (346 aa).

In terms of domain architecture, ABC transporter spans 3-237 (VRVANVRKEF…PNSPFVYGFI (235 aa)). 35–42 (GPSGSGKT) is an ATP binding site.

It belongs to the ABC transporter superfamily. Sulfate/tungstate importer (TC 3.A.1.6) family. In terms of assembly, the complex is composed of two ATP-binding proteins (CysA), two transmembrane proteins (CysT and CysW) and a solute-binding protein (CysP).

Its subcellular location is the cell inner membrane. It catalyses the reaction sulfate(out) + ATP + H2O = sulfate(in) + ADP + phosphate + H(+). The catalysed reaction is thiosulfate(out) + ATP + H2O = thiosulfate(in) + ADP + phosphate + H(+). Its function is as follows. Part of the ABC transporter complex CysAWTP involved in sulfate/thiosulfate import. Responsible for energy coupling to the transport system. This Mesorhizobium japonicum (strain LMG 29417 / CECT 9101 / MAFF 303099) (Mesorhizobium loti (strain MAFF 303099)) protein is Sulfate/thiosulfate import ATP-binding protein CysA.